Reading from the N-terminus, the 598-residue chain is Arylsulfate sulfotransferase AssT (598 aa).

The first 27 residues, 1 to 27 (MFHPYRKTLLSGTVALALGLFATGAIA), serve as a signal peptide directing secretion. 4-methylumbelliferone contacts are provided by H279 and H383. The cysteines at positions 445 and 451 are disulfide-linked. Position 463 (H463) interacts with 4-methylumbelliferone. H463 (nucleophile; sulfurylated histidine covalent intermediate) is an active-site residue.

Belongs to the aryl sulfotransferase family. Monomer.

The protein localises to the periplasm. It carries out the reaction an aryl sulfate + a phenol = an aryl sulfate + a phenol. It catalyses the reaction 4-methylumbelliferone sulfate + phenol = phenyl sulfate + 4-methylumbelliferone. The enzyme catalyses 2-naphthyl sulfate + phenol = phenyl sulfate + 2-naphthol. Catalyzes the transfer of a sulfate group from a phenyl sulfate ester to other phenolic compounds. Is able to use several substrate donors and acceptors in vitro: using phenol as an acceptor substrate, 4-methylumbelliferyl sulfate is the best donor substrate, followed by beta-naphthyl sulfate, p-nitrophenyl sulfate (PNS), and alpha-naphthyl sulfate; using PNS as a donor substrate, alpha-naphthol is the best acceptor substrate, followed by phenol, resorcinol, p-acetaminophen, tyramine, and tyrosine. Cannot use 3'-phosphoadenosine-5'-phophosulfate (PAPS), the donor substrate of mammalian sulfotransferase. May be a detoxifying enzyme, converting toxic phenolic compounds into non-toxic materials. The chain is Arylsulfate sulfotransferase AssT from Lelliottia amnigena (Enterobacter amnigenus).